The chain runs to 54 residues: Large ribosomal subunit protein bL33C (54 aa).

The protein belongs to the bacterial ribosomal protein bL33 family.

In Streptomyces coelicolor (strain ATCC BAA-471 / A3(2) / M145), this protein is Large ribosomal subunit protein bL33C (rpmG3).